A 557-amino-acid polypeptide reads, in one-letter code: Protein PECTIC ARABINOGALACTAN SYNTHESIS-RELATED (557 aa).

Residues 1 to 54 (MAELRHSSSLGSRSSSSPLRAAGDEDSSSPHVHDHSPNGGDDEDGRPRHPSRDR) form a disordered region. Residues 1–79 (MAELRHSSSL…DPRVSPQKNK (79 aa)) lie on the Cytoplasmic side of the membrane. Positions 7 to 20 (SSSLGSRSSSSPLR) are enriched in low complexity. Basic and acidic residues predominate over residues 45-54 (GRPRHPSRDR). A helical; Signal-anchor for type II membrane protein transmembrane segment spans residues 80-100 (ISLLLILILAIASLISVYGII). The Lumenal portion of the chain corresponds to 101-557 (NHLNAPYLCK…NPLTPCMCKA (457 aa)). 3 N-linked (GlcNAc...) asparagine glycosylation sites follow: Asn156, Asn188, and Asn324. A substrate-binding site is contributed by 336–338 (HLR). N-linked (GlcNAc...) asparagine glycosylation occurs at Asn375.

This sequence belongs to the glycosyltransferase GT106 family. In terms of tissue distribution, widely expressed with the highest expression in reproductive tissues and roots.

The protein localises to the golgi apparatus membrane. It functions in the pathway glycan metabolism; pectin biosynthesis. Functionally, glycosyltransferase involved in the biosynthesis of pectic type-II arabinogalactans. The chain is Protein PECTIC ARABINOGALACTAN SYNTHESIS-RELATED from Arabidopsis thaliana (Mouse-ear cress).